We begin with the raw amino-acid sequence, 265 residues long: Glutamate racemase (265 aa).

Residues 7 to 8 (DS) and 39 to 40 (YG) each bind substrate. Cysteine 70 (proton donor/acceptor) is an active-site residue. 71-72 (NT) lines the substrate pocket. Cysteine 177 serves as the catalytic Proton donor/acceptor.

It belongs to the aspartate/glutamate racemases family.

It catalyses the reaction L-glutamate = D-glutamate. The protein operates within cell wall biogenesis; peptidoglycan biosynthesis. In terms of biological role, provides the (R)-glutamate required for cell wall biosynthesis. The chain is Glutamate racemase from Prochlorococcus marinus (strain NATL1A).